The chain runs to 435 residues: GPI-anchor transamidase component PIGU (435 aa).

The Cytoplasmic segment spans residues 2-3; sequence AA. The helical transmembrane segment at 4–22 threads the bilayer; that stretch reads PLVLVLVVAVTVRAALFRS. The Lumenal portion of the chain corresponds to 23–78; sequence SLAEFISERVEVVSPLSSWKRVVEGLSLLDLGVSPYSGAVFHETPLIIYLFHFLID. The chain crosses the membrane as a helical span at residues 79 to 99; it reads YAELVFMITDALTAIALYFAI. The Cytoplasmic segment spans residues 100 to 136; that stretch reads QDFNKVVFKKQKLLLELDQYAPDVAELIRTPMEMRYI. A run of 4 helical transmembrane segments spans residues 137 to 158, 159 to 178, 179 to 194, and 195 to 205; these read PLKV…VAKS, TCAI…IKGS, AFLS…YQSL, and YPLTLFVPGLL. Topologically, residues 206–222 are cytoplasmic; that stretch reads YLLQRQYIPVKMKSKAF. Lysine 216 and methionine 217 together coordinate a cardiolipin. Residues 223–244 traverse the membrane as a helical segment; that stretch reads WIFSWEYAMMYVGSLVVIICLS. At 245 to 286 the chain is on the lumenal side; sequence FFLLSSWDFIPAVYGFILSVPDLTPNIGLFWYFFAEMFEHFS. The helical transmembrane segment at 287–306 threads the bilayer; the sequence is LFFVCVFQINVFFYTIPLAI. Residues 307–311 lie on the Cytoplasmic side of the membrane; that stretch reads KLKEH. Residue lysine 309 coordinates a cardiolipin. The next 2 membrane-spanning stretches (helical) occupy residues 312 to 331 and 332 to 345; these read PIFF…SYPT and VGDV…FPVW. Residues 346-354 lie on the Cytoplasmic side of the membrane; sequence NHLYRFLRN. Residues 355-372 form a helical membrane-spanning segment; the sequence is IFVLTCIIIVCSLLFPVL. Over 373 to 384 the chain is Lumenal; sequence WHLWIYAGSANS. Positions 383 and 385 each coordinate a 2-acyl-6-[6-phosphoethanolamine-alpha-D-mannosyl-(1-&gt;2)-6-phosphoethanolamine-alpha-D-mannosyl-(1-&gt;6)-2-phosphoethanolamine-alpha-D-mannosyl-(1-&gt;4)-alpha-D-glucosaminyl]-1-(1-radyl,2-acyl-sn-glycero-3-phospho)-1D-myo-inositol. Residues 385-406 traverse the membrane as a helical segment; sequence NFFYAITLTFNVGQILLISDYF. At 407-435 the chain is on the cytoplasmic side; sequence YAFLRREYYLTHGLYLTAKDGTEAMLVLK.

This sequence belongs to the PIGU family. In terms of assembly, heteropentamer. Part of the GPI-anchor transamidase complex, consisting of PIGK, PIGT, PIGS, PIGU and GAA1.

Its subcellular location is the endoplasmic reticulum membrane. The protein operates within glycolipid biosynthesis; glycosylphosphatidylinositol-anchor biosynthesis. Its function is as follows. Component of the glycosylphosphatidylinositol-anchor (GPI-anchor) transamidase (GPI-T) complex that catalyzes the formation of the linkage between a proprotein and a GPI-anchor and participates in GPI anchored protein biosynthesis. Binds the lipid portion of GPI-anchor. May act as an organizer in the transmembrane layer to recruit other subunits, and thus is essential for assembly of the complex. The protein is GPI-anchor transamidase component PIGU of Homo sapiens (Human).